A 77-amino-acid chain; its full sequence is U8-lycotoxin-Ls1m (77 aa).

The signal sequence occupies residues 1–20 (MKLMIFTGLVLFAIVRLIEA). The propeptide occupies 21–26 (QAENEK).

The protein belongs to the neurotoxin 19 (CSTX) family. 08 (U8-Lctx) subfamily. In terms of processing, contains 4 disulfide bonds. As to expression, expressed by the venom gland.

Its subcellular location is the secreted. The protein is U8-lycotoxin-Ls1m of Lycosa singoriensis (Wolf spider).